We begin with the raw amino-acid sequence, 101 residues long: MSDPCECFFDHESAMQRLLAMLRNSQADCTDTGCDNDGLSREGGNTMMMWTLLWTFMAMALYVMRPNSMRSDRRTADDAAIEKPTGSSDDNTPPPPPPSAM.

Residues 71-81 show a composition bias toward basic and acidic residues; it reads SDRRTADDAAI. The tract at residues 71-101 is disordered; the sequence is SDRRTADDAAIEKPTGSSDDNTPPPPPPSAM. Pro residues predominate over residues 92 to 101; that stretch reads TPPPPPPSAM.

This chain is Small integral membrane protein 14, found in Caenorhabditis elegans.